The sequence spans 168 residues: ATP synthase subunit b (168 aa).

Residues 9–29 (AIPFGTIAYTLFIFLLLLVML) traverse the membrane as a helical segment.

It belongs to the ATPase B chain family. F-type ATPases have 2 components, F(1) - the catalytic core - and F(0) - the membrane proton channel. F(1) has five subunits: alpha(3), beta(3), gamma(1), delta(1), epsilon(1). F(0) has three main subunits: a(1), b(2) and c(10-14). The alpha and beta chains form an alternating ring which encloses part of the gamma chain. F(1) is attached to F(0) by a central stalk formed by the gamma and epsilon chains, while a peripheral stalk is formed by the delta and b chains.

It localises to the cell membrane. F(1)F(0) ATP synthase produces ATP from ADP in the presence of a proton or sodium gradient. F-type ATPases consist of two structural domains, F(1) containing the extramembraneous catalytic core and F(0) containing the membrane proton channel, linked together by a central stalk and a peripheral stalk. During catalysis, ATP synthesis in the catalytic domain of F(1) is coupled via a rotary mechanism of the central stalk subunits to proton translocation. Its function is as follows. Component of the F(0) channel, it forms part of the peripheral stalk, linking F(1) to F(0). The polypeptide is ATP synthase subunit b (Bacillus thuringiensis (strain Al Hakam)).